A 526-amino-acid chain; its full sequence is Histidine-rich glycoprotein (526 aa).

Positions A1–A8 are cleaved as a signal peptide. 2 consecutive Cystatin domains span residues L9 to A126 and N127 to G243. 6 disulfide bridges follow: C14–C505, C68–C79, C95–C116, C193–C415, C207–C230, and C272–C302. The interaction with ATP5F1A stretch occupies residues W31 to K74. N-linked (GlcNAc...) asparagine glycosylation is found at N115 and N192. N240 carries N-linked (GlcNAc...) asparagine glycosylation. The tract at residues G243 to F449 is disordered. The segment covering D260–K269 has biased composition (basic residues). N310 is a glycosylation site (N-linked (GlcNAc...) asparagine). Positions P328–H346 are enriched in basic residues. Pro residues predominate over residues G347–G401. Residues G408 to Q429 show a composition bias toward basic and acidic residues. Residues H438–F449 are compositionally biased toward basic residues. N-linked (GlcNAc...) asparagine glycosylation is present at N485.

As to quaternary structure, interacts with THBS1 (via the TSP type I repeats); the interaction blocks the antiangiogenic effect of THBS1 with CD36. Interacts with THBS2; the interaction blocks the antiangiogenic effect of THBS2 with CD36. Interacts with HPSE; the interaction is enhanced at acidic pH, partially inhibits binding of HPSE to cell surface receptors and modulates its enzymatic activity. Interacts (via the HRR domain) with TMP1; the interaction partially mediates the antiangiogenic properties of HRG. Interacts with kappa and lambda light chains of IgG molecules. Interacts with ATP5F1A; the interaction occurs on the surface of T-cells and alters their cell morphology in concert with CONA. Binds IgG molecules containing kappa and lambda light chains and inhibits the formation of insoluble immunoglobulin complexes. Interacts with F12; the interaction, which is enhanced in the presence of zinc ions and inhibited by heparin-binding to HRG, inhibits factor XII autoactivation and contact-initiated coagulation. Interacts with PLG (via its Kringle domains); the interaction tethers PLG to the cell surface and enhances its activation. Interacts (via the HRR domain) with TPM1; the interaction appears to contribute to the antiangiogenic properties of the HRR domain. Post-translationally, N-glycosylated. Proteolytic cleavage produces several HRG fragments which are mostly disulfide-linked and, therefore, not released. On platelet activation, may release a 33 kDa antiangiogenic peptide which encompasses the HRR.

It is found in the secreted. Its function is as follows. Plasma glycoprotein that binds a number of ligands such as heme, heparin, heparan sulfate, thrombospondin, plasminogen, and divalent metal ions. Inhibits rosette formation. Acts as an adapter protein and implicated in regulating many processes such as immune complex and pathogen clearance, cell adhesion, angiogenesis, coagulation and fibrinolysis. Mediates clearance of necrotic cells through enhancing the phagocytosis of necrotic cells in a heparan sulfate-dependent pathway. This process can be regulated by the presence of certain HRG ligands such as heparin and zinc ions. Binds to IgG subclasses of immunoglobins containing kappa and lambda light chains with different affinities regulating their clearance and inhibiting the formation of insoluble immune complexes. Binds T-cells and alters the cell morphology Modulates angiogenesis by blocking the CD6-mediated antiangiongenic effect of thrombospondins, THBS1 and THBS2. Tethers plasminogen to the cell surface. The sequence is that of Histidine-rich glycoprotein (HRG) from Oryctolagus cuniculus (Rabbit).